Here is a 312-residue protein sequence, read N- to C-terminus: MIEFEKPNITVVDQEEAYGKFVVEPLERGFGTTLGNSLRRVLLTSIPGTALSYIQIDGVLHEFSTIPGVREDVTKIILNLKKLELKSLSDEEKIAEIDVTGPAIVTAADLKVDSDIEVLNPDQYICSIADGGHLHMNVAIKTGRGYVPASENKTDDMPIGVIPVDSLFSPIKKVNYQVESARVGKRDDYDKLTLEIWTDGSITPNDALSFAAKILVEHFKVFMSTDMDAQFDDVMVEKEDDKNEKKLEMTIEELDLSVRSYNCLKRAGINTVQELTDKSEADMMRVRNLGRKSLEEVKNKLADLGLSLRQDD.

An alpha N-terminal domain (alpha-NTD) region spans residues methionine 1 to aspartate 226. Positions asparagine 243 to aspartate 312 are alpha C-terminal domain (alpha-CTD).

It belongs to the RNA polymerase alpha chain family. As to quaternary structure, homodimer. The RNAP catalytic core consists of 2 alpha, 1 beta, 1 beta' and 1 omega subunit. When a sigma factor is associated with the core the holoenzyme is formed, which can initiate transcription.

The catalysed reaction is RNA(n) + a ribonucleoside 5'-triphosphate = RNA(n+1) + diphosphate. Functionally, DNA-dependent RNA polymerase catalyzes the transcription of DNA into RNA using the four ribonucleoside triphosphates as substrates. The chain is DNA-directed RNA polymerase subunit alpha from Lactobacillus johnsonii (strain CNCM I-12250 / La1 / NCC 533).